We begin with the raw amino-acid sequence, 359 residues long: Fe-S cluster assembly protein DRE2 (359 aa).

The N-terminal SAM-like domain stretch occupies residues 1 to 148 (MASTGRVLLL…KPDVAAQQAV (148 aa)). Disordered stretches follow at residues 97–116 (NKAWGLRSSGNNSDDDNDND) and 149–210 (PLKL…PSGV). The segment at 149–246 (PLKLGRRKKE…EDELLGEDDM (98 aa)) is linker. The span at 152-164 (LGRRKKEKERRHP) shows a compositional bias: basic residues. The span at 167–183 (NDVTNGKVNAPSSNGVN) shows a compositional bias: polar residues. The span at 184 to 200 (ASTSTATATATTTTTTT) shows a compositional bias: low complexity. Residues Cys256, Cys267, Cys270, and Cys272 each contribute to the [2Fe-2S] cluster site. Positions 256–272 (CRPKPGKRRRACKDCSC) are fe-S binding site A. Positions 322, 325, 333, and 336 each coordinate [4Fe-4S] cluster. 2 consecutive short sequence motifs (cx2C motif) follow at residues 322–325 (CGNC) and 333–336 (CDGC). A fe-S binding site B region spans residues 322–336 (CGNCSLGDAFRCDGC).

It belongs to the anamorsin family. Monomer. Interacts with TAH18. Interacts with MIA40. [2Fe-2S] cluster is required as a cofactor. It depends on [4Fe-4S] cluster as a cofactor.

The protein resides in the cytoplasm. It localises to the mitochondrion intermembrane space. In terms of biological role, component of the cytosolic iron-sulfur (Fe-S) protein assembly (CIA) machinery required for the maturation of extramitochondrial Fe-S proteins. Part of an electron transfer chain functioning in an early step of cytosolic Fe-S biogenesis, facilitating the de novo assembly of a [4Fe-4S] cluster on the scaffold complex CFD1-NBP35. Electrons are transferred to DRE2 from NADPH via the FAD- and FMN-containing protein TAH18. TAH18-DRE2 are also required for the assembly of the diferric tyrosyl radical cofactor of ribonucleotide reductase (RNR), probably by providing electrons for reduction during radical cofactor maturation in the catalytic small subunit RNR2. The chain is Fe-S cluster assembly protein DRE2 from Blastomyces gilchristii (strain SLH14081) (Blastomyces dermatitidis).